The sequence spans 373 residues: MSKVALITGVTGQDGSYLAEFLLEKGYEVHGIKRRASSFNTERVDHIYQDPHTCNPKFHLHYGDLSDTSNLTRILREVQPDEVYNLGAMSHVAVSFESPEYTADVDAMGTLRLLEAIRFLGLEKKTRFYQASTSELYGLVQEIPQKETTPFYPRSPYAVAKLYAYWITVNYRESYGMYACNGILFNHESPRRGETFVTRKITRAIANIAQGLESCLYLGNMDSLRDWGHAKDYVKMQWMMLQQEQPEDFVIATGVQYSVRQFVEMAAAQLGIKLRFEGTGVEEKGIVVSVTGHDAPGVKPGDVIIAVDPRYFRPAEVETLLGDPTKAHEKLGWKPEITLREMVSEMVANDLEAAKKHSLLKSHGYDVAIALES.

NADP(+) is bound by residues 9-14 (GVTGQD), 64-65 (DL), 86-90 (LGAMS), and Y101. T133 is an active-site residue. Active-site nucleophile residues include E135 and Y157. Residues K161, H187, and R192 each coordinate NADP(+).

The protein belongs to the NAD(P)-dependent epimerase/dehydratase family. GDP-mannose 4,6-dehydratase subfamily. NADP(+) serves as cofactor.

The catalysed reaction is GDP-alpha-D-mannose = GDP-4-dehydro-alpha-D-rhamnose + H2O. Its pathway is nucleotide-sugar biosynthesis; GDP-L-fucose biosynthesis via de novo pathway; GDP-L-fucose from GDP-alpha-D-mannose: step 1/2. Catalyzes the conversion of GDP-D-mannose to GDP-4-dehydro-6-deoxy-D-mannose. In Escherichia coli O157:H7, this protein is GDP-mannose 4,6-dehydratase.